The sequence spans 266 residues: Glucosamine-6-phosphate deaminase (266 aa).

D72 functions as the Proton acceptor; for enolization step in the catalytic mechanism. Residue D141 is the For ring-opening step of the active site. Residue H143 is the Proton acceptor; for ring-opening step of the active site. Residue E148 is the For ring-opening step of the active site.

This sequence belongs to the glucosamine/galactosamine-6-phosphate isomerase family. NagB subfamily. As to quaternary structure, homohexamer.

It carries out the reaction alpha-D-glucosamine 6-phosphate + H2O = beta-D-fructose 6-phosphate + NH4(+). Its pathway is amino-sugar metabolism; N-acetylneuraminate degradation; D-fructose 6-phosphate from N-acetylneuraminate: step 5/5. Its activity is regulated as follows. Allosterically activated by N-acetylglucosamine 6-phosphate (GlcNAc6P). In terms of biological role, catalyzes the reversible isomerization-deamination of glucosamine 6-phosphate (GlcN6P) to form fructose 6-phosphate (Fru6P) and ammonium ion. This chain is Glucosamine-6-phosphate deaminase, found in Vibrio cholerae serotype O1 (strain ATCC 39541 / Classical Ogawa 395 / O395).